A 201-amino-acid polypeptide reads, in one-letter code: Pyridoxine/pyridoxamine 5'-phosphate oxidase (201 aa).

Residues 45-50 (RMVLLK), 65-66 (YT), Arg-71, Lys-72, and Gln-94 contribute to the FMN site. Residue Lys-50 participates in substrate binding. 3 residues coordinate substrate: Tyr-112, Arg-116, and Ser-120. FMN is bound by residues 129 to 130 (QS) and Trp-174. 180–182 (RLH) is a substrate binding site. An FMN-binding site is contributed by Arg-184.

The protein belongs to the pyridoxamine 5'-phosphate oxidase family. As to quaternary structure, homodimer. FMN is required as a cofactor.

The enzyme catalyses pyridoxamine 5'-phosphate + O2 + H2O = pyridoxal 5'-phosphate + H2O2 + NH4(+). It catalyses the reaction pyridoxine 5'-phosphate + O2 = pyridoxal 5'-phosphate + H2O2. Its pathway is cofactor metabolism; pyridoxal 5'-phosphate salvage; pyridoxal 5'-phosphate from pyridoxamine 5'-phosphate: step 1/1. The protein operates within cofactor metabolism; pyridoxal 5'-phosphate salvage; pyridoxal 5'-phosphate from pyridoxine 5'-phosphate: step 1/1. Catalyzes the oxidation of either pyridoxine 5'-phosphate (PNP) or pyridoxamine 5'-phosphate (PMP) into pyridoxal 5'-phosphate (PLP). In Rhodospirillum rubrum (strain ATCC 11170 / ATH 1.1.1 / DSM 467 / LMG 4362 / NCIMB 8255 / S1), this protein is Pyridoxine/pyridoxamine 5'-phosphate oxidase.